The primary structure comprises 463 residues: L-2-hydroxyglutarate dehydrogenase, mitochondrial (463 aa).

A mitochondrion-targeting transit peptide spans 1 to 52 (MVPALRYLGSVCGRARGIFPGGFSAAHTPASGKSRLLCQGGRRASTSSFDIV). N6-acetyllysine is present on residues Lys104 and Lys173.

The protein belongs to the L2HGDH family. FAD serves as cofactor.

It localises to the mitochondrion. It catalyses the reaction (S)-2-hydroxyglutarate + A = 2-oxoglutarate + AH2. The chain is L-2-hydroxyglutarate dehydrogenase, mitochondrial (L2HGDH) from Bos taurus (Bovine).